A 358-amino-acid polypeptide reads, in one-letter code: Ion-translocating oxidoreductase complex subunit D (358 aa).

Transmembrane regions (helical) follow at residues 19-39 (IMLWVILAMMPAFFTQIYYFG), 41-61 (GVVLQSALAIGTAIIAEFIAI), 79-99 (LTALILAMAIPPYAPYWVIII), and 125-145 (IGYVILLISFPLQMTTWMPPI). Residue Thr186 is modified to FMN phosphoryl threonine. The next 5 membrane-spanning stretches (helical) occupy residues 220 to 240 (FAQGWWQINVAFLAGGIFLIL), 248 to 268 (IPVAMLVTFFCLATATAFTGF), 271 to 291 (LSAISQLVSGAMMFGAFFIAT), 297 to 317 (SITPRGKIIFGALVGLFVYLI), and 321 to 341 (GNYPDGVAFAILLSNICVPLI).

This sequence belongs to the NqrB/RnfD family. The complex is composed of six subunits: RnfA, RnfB, RnfC, RnfD, RnfE and RnfG. It depends on FMN as a cofactor.

It is found in the cell inner membrane. Part of a membrane-bound complex that couples electron transfer with translocation of ions across the membrane. The protein is Ion-translocating oxidoreductase complex subunit D of Haemophilus influenzae (strain PittGG).